A 468-amino-acid polypeptide reads, in one-letter code: UDP-glucosyl transferase 74CD1 (468 aa).

Residue Gly-20 coordinates UDP-alpha-D-glucose. The active-site Proton acceptor is the His-21. Catalysis depends on Asp-114, which acts as the Charge relay. Residues Ser-292, Trp-344, Gln-347, His-362, Trp-365, Asn-366, Ser-367, Glu-370, Asp-386, and Gln-387 each coordinate UDP-alpha-D-glucose.

This sequence belongs to the UDP-glycosyltransferase family. In terms of tissue distribution, mainly expressed in flowers, flower buds and young leaves, and, to a lesser extent, in old leaves, stems and roots.

It participates in secondary metabolite biosynthesis; terpenoid biosynthesis. In terms of biological role, component of the oleanane-type triterpene saponins (e.g. saponarioside A and saponarioside B) biosynthetic pathway, leading to the production of natural products with detergent properties used as traditional sources of soap. A glycosyltransferase that, together with SDR1, mediates the conversion of QA-tri to QA-triF; UGT74CD1 may transfer 4-keto-6-deoxy-glucose to QA-tri, which is in turn reduced to D-fucose by SDR1, thus leading to QA-triF formation via the initiation of the C-28 sugar chain. This chain is UDP-glucosyl transferase 74CD1, found in Saponaria officinalis (Common soapwort).